A 1666-amino-acid polypeptide reads, in one-letter code: Atrochrysone carboxylic acid synthase PKS4 (1666 aa).

In terms of domain architecture, Ketosynthase family 3 (KS3) spans 15-452 (FEPIAIVGIG…GNAGFMVIEE (438 aa)). Residues Cys194, His332, and His372 each act as for beta-ketoacyl synthase activity in the active site. The interval 555–863 (AFCFSGQGGE…WMTALDALMR (309 aa)) is malonyl-CoA:ACP transacylase (MAT) domain. The active-site For acyl/malonyl transferase activity is the Ser632. The N-terminal hotdog fold stretch occupies residues 905 to 1034 (REVKASSTML…EQDLLESLSL (130 aa)). A PKS/mFAS DH domain is found at 905–1206 (REVKASSTML…MAKMKIYVLK (302 aa)). Residues 935–1203 (LLNHVMAGYT…DVRMAKMKIY (269 aa)) are product template (PT) domain. The segment at 1050 to 1206 (STDVLRKELA…MAKMKIYVLK (157 aa)) is C-terminal hotdog fold. Ser1269 bears the O-(pantetheine 4'-phosphoryl)serine mark. The Carrier domain occupies 1331-1395 (ATSPSLPIMP…TSTEPSQTLV (65 aa)). A proline-rich linker region region spans residues 1334–1397 (PSLPIMPNGV…TEPSQTLVAN (64 aa)). Residues 1444–1529 (TVIGIHCPGL…PPGVVGLTAQ (86 aa)) are alpha/beta hydrolase superfamily-type thioesterase (TE) domain.

It carries out the reaction holo-[ACP] + 8 malonyl-CoA + 8 H(+) = atrochrysone carboxyl-[ACP] + 8 CO2 + 8 CoA + 2 H2O. It functions in the pathway secondary metabolite biosynthesis. Functionally, non-reducing polyketide synthase that synthesizes the universal anthraquinone precursor atrochrysone carboxylic acid from malonyl-CoA. Produces a mixture of both 3R and 3S enantiomers with an excess of the 3S form. PKS4 catalyzes both hepta- and octaketide synthesis and also yields 6-hydroxymusizin, probably via carboxylating activity inherent to the KS domain. The chain is Atrochrysone carboxylic acid synthase PKS4 from Calonarius odorifer (Mushroom).